A 965-amino-acid polypeptide reads, in one-letter code: Pullulanase 1, chloroplastic (965 aa).

The N-terminal 62 residues, 1–62 (MALTLTPTSS…SKTSLHCLCS (62 aa)), are a transit peptide targeting the chloroplast. The Nucleophile role is filled by Asp552. Glu589 functions as the Proton donor in the catalytic mechanism.

Belongs to the glycosyl hydrolase 13 family.

It localises to the plastid. It is found in the chloroplast stroma. The enzyme catalyses Hydrolysis of (1-&gt;6)-alpha-D-glucosidic linkages in alpha- and beta-limit dextrins of amylopectin and glycogen, and in amylopectin and pullulan.. It functions in the pathway glycan biosynthesis; starch biosynthesis. It participates in glycan degradation; starch degradation. Involved in starch degradation and also probably in the trimming of pre-amylopectin chains during starch synthesis. In Arabidopsis thaliana (Mouse-ear cress), this protein is Pullulanase 1, chloroplastic (PU1).